The sequence spans 764 residues: G-type lectin S-receptor-like serine/threonine-protein kinase SD3-1 (764 aa).

The signal sequence occupies residues 1–24; it reads MKMLRALLLCLSLVFFLAFQIVVS. 2 Bulb-type lectin domains span residues 25 to 151 and 154 to 279; these read EIQL…QSFG and TDTL…WKPV. The Extracellular segment spans residues 25–442; that stretch reads EIQLGSKLVV…TKSHSICIPC (418 aa). N-linked (GlcNAc...) asparagine glycosylation is found at N92, N198, and N248. The region spanning 283-320 is the EGF-like; atypical domain; that stretch reads VENQCRVFATCGSQVCSFNSSGYTECNCPFNAFVSVSD. 5 disulfide bridges follow: C287–C298, C293–C308, C332–C413, C365–C388, and C369–C375. N301 and N353 each carry an N-linked (GlcNAc...) asparagine glycan. An Apple domain is found at 332–413; the sequence is CKSGFNMVKF…LSSISYVKTC (82 aa). N-linked (GlcNAc...) asparagine glycosylation occurs at N423. Residues 443 to 463 traverse the membrane as a helical segment; it reads LVGATSTTLVLFLGFQLGIVV. At 464–764 the chain is on the cytoplasmic side; that stretch reads YIYRRKKKLA…SESSQSLYEP (301 aa). The Protein kinase domain occupies 466–764; sequence YRRKKKLAKK…SESSQSLYEP (299 aa). ATP is bound by residues 508 to 516 and K526; that span reads IGPQIFKGV. Residues 586–603 are caM-binding; the sequence is LRSKKLTWRIRTDTCLSV. The disordered stretch occupies residues 738–764; it reads DPPPPPFACARSSPTNSSESSQSLYEP. The segment covering 749–764 has biased composition (low complexity); sequence SSPTNSSESSQSLYEP.

It localises to the cell membrane. The catalysed reaction is L-seryl-[protein] + ATP = O-phospho-L-seryl-[protein] + ADP + H(+). It carries out the reaction L-threonyl-[protein] + ATP = O-phospho-L-threonyl-[protein] + ADP + H(+). The protein is G-type lectin S-receptor-like serine/threonine-protein kinase SD3-1 (SD31) of Arabidopsis thaliana (Mouse-ear cress).